Here is a 330-residue protein sequence, read N- to C-terminus: Phosphate acyltransferase (330 aa).

The protein belongs to the PlsX family. In terms of assembly, homodimer. Probably interacts with PlsY.

The protein resides in the cytoplasm. It carries out the reaction a fatty acyl-[ACP] + phosphate = an acyl phosphate + holo-[ACP]. It participates in lipid metabolism; phospholipid metabolism. Its function is as follows. Catalyzes the reversible formation of acyl-phosphate (acyl-PO(4)) from acyl-[acyl-carrier-protein] (acyl-ACP). This enzyme utilizes acyl-ACP as fatty acyl donor, but not acyl-CoA. The chain is Phosphate acyltransferase from Streptococcus pneumoniae (strain P1031).